The primary structure comprises 278 residues: Lipoyl-[GcvH]:protein N-lipoyltransferase (278 aa).

The region spanning arginine 44 to valine 250 is the BPL/LPL catalytic domain. The Acyl-thioester intermediate role is filled by cysteine 149.

Belongs to the octanoyltransferase LipL family.

It carries out the reaction N(6)-[(R)-lipoyl]-L-lysyl-[glycine-cleavage complex H protein] + L-lysyl-[lipoyl-carrier protein] = L-lysyl-[glycine-cleavage complex H protein] + N(6)-[(R)-lipoyl]-L-lysyl-[lipoyl-carrier protein]. It participates in protein modification; protein lipoylation via exogenous pathway. Its function is as follows. Catalyzes the amidotransfer (transamidation) of the lipoyl moiety from lipoyl-GcvH to the lipoyl domain of the E2 subunit of lipoate-dependent enzymes. Takes part in a pathway for scavenging of lipoic acid derived from eukaryotic host cells. Cannot use lipoyl-tripeptide (DK(L)A), lipoamide (LD), or free lipoate as substrate. The polypeptide is Lipoyl-[GcvH]:protein N-lipoyltransferase (Listeria monocytogenes serovar 1/2a (strain ATCC BAA-679 / EGD-e)).